A 238-amino-acid chain; its full sequence is Sugar fermentation stimulation protein homolog (238 aa).

Belongs to the SfsA family.

This chain is Sugar fermentation stimulation protein homolog, found in Vibrio vulnificus (strain YJ016).